Reading from the N-terminus, the 75-residue chain is uncharacterized protein (75 aa).

The first 19 residues, 1-19, serve as a signal peptide directing secretion; that stretch reads MQCVCLCVFVLLLAGCVTS.

In terms of tissue distribution, nacreous layer of shell (at protein level).

It is found in the secreted. This is an uncharacterized protein from Margaritifera margaritifera (Freshwater pearl mussel).